Consider the following 438-residue polypeptide: Na(+)/H(+) antiporter NhaA (438 aa).

Helical transmembrane passes span 23–43 (FGGI…NSFL), 62–82 (FFIG…LFFL), 104–124 (SFPV…YFFL), 133–153 (GFGI…MLLG), 162–182 (VFLI…IALF), 185–205 (TNLK…LAVL), 221–241 (VLLW…AVIL), 302–322 (FLAP…NAGV), 337–357 (LGVI…ITFI), 372–392 (WWHI…SMFI), and 410–430 (IAIL…LFAL).

This sequence belongs to the NhaA Na(+)/H(+) (TC 2.A.33) antiporter family.

The protein localises to the cell inner membrane. It catalyses the reaction Na(+)(in) + 2 H(+)(out) = Na(+)(out) + 2 H(+)(in). In terms of biological role, na(+)/H(+) antiporter that extrudes sodium in exchange for external protons. The polypeptide is Na(+)/H(+) antiporter NhaA (Helicobacter pylori (strain HPAG1)).